Consider the following 56-residue polypeptide: Defensin-1 (56 aa).

The signal sequence occupies residues 1–24; the sequence is MKAIVVLLILALILCLYAMTTVEG. Cystine bridges form between Cys-26–Cys-45, Cys-31–Cys-53, and Cys-35–Cys-55.

Its subcellular location is the secreted. Its function is as follows. Antibacterial protein involved in the immune response to septic injury. When combined with 14.026 kDa and 14.059 kDa hemolymph antimicrobial peptides, it has a strong cooperative activity against the Gram-positive bacteria B.subtilis and S.aureus, and against the Gram-negative bacteria E.coli DH5-alpha and K.pneumoniae ATCC 138833. Does not show detectable antibacterial activity when present alone. Has no hemolytic activity in human erythrocytes. The chain is Defensin-1 from Centruroides limpidus (Mexican scorpion).